The sequence spans 134 residues: UPF0412 protein YaaI (134 aa).

Positions 1–23 are cleaved as a signal peptide; sequence MKSVFTISASLAISLMLCCTAQA.

It belongs to the UPF0412 family.

The chain is UPF0412 protein YaaI from Shigella dysenteriae serotype 1 (strain Sd197).